The chain runs to 435 residues: 3-phosphoshikimate 1-carboxyvinyltransferase (435 aa).

3-phosphoshikimate-binding residues include Lys-23, Ser-24, and Arg-28. Residue Lys-23 coordinates phosphoenolpyruvate. Phosphoenolpyruvate-binding residues include Gly-97 and Arg-125. The 3-phosphoshikimate site is built by Ser-170, Ser-171, Gln-172, Ser-198, Asp-315, Asn-338, and Lys-342. Residue Gln-172 participates in phosphoenolpyruvate binding. Asp-315 acts as the Proton acceptor in catalysis. Phosphoenolpyruvate-binding residues include Arg-346, Arg-388, and Lys-413.

This sequence belongs to the EPSP synthase family. Monomer.

The protein localises to the cytoplasm. It catalyses the reaction 3-phosphoshikimate + phosphoenolpyruvate = 5-O-(1-carboxyvinyl)-3-phosphoshikimate + phosphate. It participates in metabolic intermediate biosynthesis; chorismate biosynthesis; chorismate from D-erythrose 4-phosphate and phosphoenolpyruvate: step 6/7. Catalyzes the transfer of the enolpyruvyl moiety of phosphoenolpyruvate (PEP) to the 5-hydroxyl of shikimate-3-phosphate (S3P) to produce enolpyruvyl shikimate-3-phosphate and inorganic phosphate. This is 3-phosphoshikimate 1-carboxyvinyltransferase from Buchnera aphidicola subsp. Cinara cedri (strain Cc).